The sequence spans 337 residues: Cytoskeleton protein RodZ (337 aa).

Topologically, residues 1–111 (MNTEATHDQN…LGKRRKKRDG (111 aa)) are cytoplasmic. Residues 19–71 (LRNAREQLGLSQQAVAERLCLKVSTVRDIEEDKAPADLASTFLRGYIRSYARL) enclose the HTH cro/C1-type domain. The H-T-H motif DNA-binding region spans 30 to 49 (QQAVAERLCLKVSTVRDIEE). Residues 112-132 (WLMTFTWLVLFVVIGLSGAWW) traverse the membrane as a helical; Signal-anchor for type II membrane protein segment. Residues 133–337 (WQDHKAQQEE…TLNAEQSPAQ (205 aa)) are Periplasmic-facing. Positions 145–167 (TMADQSSAELSSNSEQGQSVPLN) are enriched in polar residues. The segment at 145-218 (TMADQSSAEL…AVVSPSQANV (74 aa)) is disordered. Positions 168–207 (TSTTTDPATTSTPPASVDTTATNTQTPAVTAPAPAVDPQQ) are enriched in low complexity. Positions 208–218 (NAVVSPSQANV) are enriched in polar residues.

Belongs to the RodZ family.

The protein localises to the cell inner membrane. In terms of biological role, cytoskeletal protein that is involved in cell-shape control through regulation of the length of the long axis. The sequence is that of Cytoskeleton protein RodZ from Shigella dysenteriae serotype 1 (strain Sd197).